The primary structure comprises 148 residues: 3-dehydroquinate dehydratase 2 (148 aa).

Catalysis depends on tyrosine 24, which acts as the Proton acceptor. Substrate is bound by residues asparagine 75, histidine 81, and aspartate 88. Histidine 101 acts as the Proton donor in catalysis. Residues 102 to 103 (LS) and arginine 112 each bind substrate.

This sequence belongs to the type-II 3-dehydroquinase family. Homododecamer.

The enzyme catalyses 3-dehydroquinate = 3-dehydroshikimate + H2O. It participates in metabolic intermediate biosynthesis; chorismate biosynthesis; chorismate from D-erythrose 4-phosphate and phosphoenolpyruvate: step 3/7. Functionally, catalyzes a trans-dehydration via an enolate intermediate. This Pseudomonas aeruginosa (strain ATCC 15692 / DSM 22644 / CIP 104116 / JCM 14847 / LMG 12228 / 1C / PRS 101 / PAO1) protein is 3-dehydroquinate dehydratase 2 (aroQ2).